Here is a 148-residue protein sequence, read N- to C-terminus: Glutamyl-tRNA(Gln) amidotransferase subunit C, mitochondrial (148 aa).

It belongs to the GatC family. Subunit of the heterotrimeric GatCAB amidotransferase (AdT) complex, composed of A, B and C subunits.

Its subcellular location is the mitochondrion. The enzyme catalyses L-glutamyl-tRNA(Gln) + L-glutamine + ATP + H2O = L-glutaminyl-tRNA(Gln) + L-glutamate + ADP + phosphate + H(+). Allows the formation of correctly charged Gln-tRNA(Gln) through the transamidation of misacylated Glu-tRNA(Gln) in the mitochondria. The reaction takes place in the presence of glutamine and ATP through an activated gamma-phospho-Glu-tRNA(Gln). This is Glutamyl-tRNA(Gln) amidotransferase subunit C, mitochondrial from Drosophila melanogaster (Fruit fly).